A 185-amino-acid chain; its full sequence is Ribosome-recycling factor (185 aa).

The protein belongs to the RRF family.

The protein localises to the cytoplasm. In terms of biological role, responsible for the release of ribosomes from messenger RNA at the termination of protein biosynthesis. May increase the efficiency of translation by recycling ribosomes from one round of translation to another. This is Ribosome-recycling factor from Vibrio campbellii (strain ATCC BAA-1116).